The sequence spans 2602 residues: Filamin-B (2602 aa).

Residues 1–239 (MPVTEKDLAE…VMTYLSQFPK (239 aa)) are actin-binding. Calponin-homology (CH) domains follow at residues 16–122 (KIQQ…LHYS) and 139–242 (QTPK…KAKL). T216 is subject to Phosphothreonine. Residues 244 to 267 (PGAPLKPKLNPKKARAYGRGIEPT) are disordered. 15 Filamin repeats span residues 249–347 (KPKL…EVSV), 349–446 (KAQG…VVQV), 447–543 (GEAC…EVQV), 544–636 (GPEA…MAFI), 640–736 (TGGY…RVNI), 737–839 (GQGS…RVKV), 840–938 (DPSH…TVGV), 939–1034 (AAPL…TVEA), 1035–1127 (SLPP…KADI), 1128–1222 (EMPF…RVKV), 1223–1322 (EPAV…KVAV), 1323–1415 (TEGC…RVPV), 1416–1511 (KDVV…KVKV), 1512–1608 (LPTY…RIRA), and 1609–1704 (TQTG…TVMA). T519 is modified (phosphothreonine). K681 carries the post-translational modification N6-acetyllysine. S730 carries the phosphoserine modification. A phosphoserine mark is found at S886, S932, S983, and S1028. Residues 1128 to 1511 (EMPFDPSKVV…IPRSPFKVKV (384 aa)) are interaction with FBLP1. Position 1307 is a phosphothreonine (T1307). S1316 carries the post-translational modification Phosphoserine. Residues S1433, N1474, S1505, and S1602 each carry the phosphoserine modification. The tract at residues 1705-1728 (TDGEVTAVEEAPVNACPPGFRPWV) is hinge 1. 8 Filamin repeats span residues 1729–1813 (TEEA…SPLQ), 1816–1908 (VNYP…TAKI), 1919–1994 (KLGS…SIMV), 1997–2089 (SEIG…TVKI), 2091–2185 (GEGR…QFTV), 2188–2280 (LGEG…LVPV), 2282–2375 (APSD…KVRV), and 2379–2471 (GQAG…KAKV). K1780 carries the N6-acetyllysine modification. The tract at residues 1862-2148 (SKAEISCIDN…RVTEAEIVPM (287 aa)) is interaction with the cytoplasmic tail of GP1BA. Positions 2060-2225 (SYFPTVPGVY…IWTREAGAGG (166 aa)) are interaction with FLNA 1. A phosphoserine mark is found at S2083, S2107, and S2113. Positions 2130-2602 (SAHVTSPSGR…PGSPFHVTVP (473 aa)) are interaction with INPPL1. Phosphoserine occurs at positions 2369 and 2465. K2468 is covalently cross-linked (Glycyl lysine isopeptide (Lys-Gly) (interchain with G-Cter in ISG15)). The interval 2472 to 2506 (TGQRLVSPGSANETSSILVESVTRSSTETCYSAIP) is hinge 2. The interval 2472–2602 (TGQRLVSPGS…PGSPFHVTVP (131 aa)) is self-association site, tail. 3 positions are modified to phosphoserine: S2478, S2481, and S2492. One copy of the Filamin 24 repeat lies at 2507-2601 (KASSDASKVT…IPGSPFHVTV (95 aa)). The interaction with FLNA 2 stretch occupies residues 2507–2602 (KASSDASKVT…PGSPFHVTVP (96 aa)). An N6-succinyllysine mark is found at K2518 and K2524. K2576 is modified (N6-acetyllysine).

It belongs to the filamin family. In terms of assembly, homodimer. Interacts with MICALL2. Interacts with RFLNA and RFLNB. Isoform 1 interacts with FBLP1, FLNA, FLNC, GP1BA, INPPL1, ITGB1A, PSEN1 and PSEN2. Isoform 3 interacts with ITGB1A, ITGB1D, ITGB3 and ITGB6. Interacts with MYOT and MYOZ1. Interacts with HBV capsid protein. Interacts with ASB2 isoform 1; the interaction targets FLNB for proteasomal degradation. In terms of processing, ISGylation prevents ability to interact with the upstream activators of the JNK cascade and inhibits IFNA-induced JNK signaling. Post-translationally, ubiquitination by a SCF-like complex containing ASB2 isoform 1 leads to proteasomal degradation which promotes muscle differentiation. As to expression, ubiquitous. Isoform 1 and isoform 2 are expressed in placenta, bone marrow, brain, umbilical vein endothelial cells (HUVEC), retina and skeletal muscle. Isoform 1 is predominantly expressed in prostate, uterus, liver, thyroid, stomach, lymph node, small intestine, spleen, skeletal muscle, kidney, placenta, pancreas, heart, lung, platelets, endothelial cells, megakaryocytic and erythroleukemic cell lines. Isoform 2 is predominantly expressed in spinal cord, platelet and Daudi cells. Also expressed in thyroid adenoma, neurofibrillary tangles (NFT), senile plaques in the hippocampus and cerebral cortex in Alzheimer disease (AD). Isoform 3 and isoform 6 are expressed predominantly in lung, heart, skeletal muscle, testis, spleen, thymus and leukocytes. Isoform 4 and isoform 5 are expressed in heart.

The protein resides in the cytoplasm. It localises to the cell cortex. Its subcellular location is the cytoskeleton. It is found in the stress fiber. The protein localises to the myofibril. The protein resides in the sarcomere. It localises to the z line. Connects cell membrane constituents to the actin cytoskeleton. May promote orthogonal branching of actin filaments and links actin filaments to membrane glycoproteins. Anchors various transmembrane proteins to the actin cytoskeleton. Interaction with FLNA may allow neuroblast migration from the ventricular zone into the cortical plate. Various interactions and localizations of isoforms affect myotube morphology and myogenesis. Isoform 6 accelerates muscle differentiation in vitro. The chain is Filamin-B (FLNB) from Homo sapiens (Human).